Consider the following 122-residue polypeptide: Large ribosomal subunit protein uL14c (122 aa).

It belongs to the universal ribosomal protein uL14 family. Part of the 50S ribosomal subunit.

The protein resides in the plastid. The protein localises to the chloroplast. Its function is as follows. Binds to 23S rRNA. This is Large ribosomal subunit protein uL14c from Mesostigma viride (Green alga).